Here is a 414-residue protein sequence, read N- to C-terminus: 2,3-diketo-5-methylthiopentyl-1-phosphate enolase (414 aa).

The active-site Proton acceptor is lysine 99. Substrate is bound by residues lysine 148, lysine 174–glutamate 177, histidine 265, glycine 338, and glycine 360–glycine 361. Mg(2+)-binding residues include lysine 174, aspartate 176, and glutamate 177. Lysine 174 carries the N6-carboxylysine modification.

This sequence belongs to the RuBisCO large chain family. Type IV subfamily. Homodimer. The cofactor is Mg(2+).

The catalysed reaction is 5-methylsulfanyl-2,3-dioxopentyl phosphate = 2-hydroxy-5-methylsulfanyl-3-oxopent-1-enyl phosphate. It participates in amino-acid biosynthesis; L-methionine biosynthesis via salvage pathway; L-methionine from S-methyl-5-thio-alpha-D-ribose 1-phosphate: step 3/6. Its function is as follows. Catalyzes the enolization of 2,3-diketo-5-methylthiopentyl-1-phosphate (DK-MTP-1-P) into 2-hydroxy-3-keto-5-methylthiopentenyl-1-phosphate (HK-MTPenyl-1-P). This is 2,3-diketo-5-methylthiopentyl-1-phosphate enolase from Bacillus cereus (strain AH187).